Reading from the N-terminus, the 162-residue chain is Protein SLM4 (162 aa).

A helical transmembrane segment spans residues 127–144 (LLLLFIAEGSFPYGLLVI).

As to quaternary structure, component of the GSE complex composed of GTR1, GTR2, SLM4, MEH1 and LTV1. Component of the EGO complex, at least composed of GTR2, SLM4 and MEH1.

The protein localises to the vacuole membrane. Its function is as follows. Component of the GSE complex, a GTPase complex required for intracellular sorting of GAP1 out of the endosome. Component of the EGO complex, a complex involved in the regulation of microautophagy. The polypeptide is Protein SLM4 (SLM4) (Saccharomyces cerevisiae (strain ATCC 204508 / S288c) (Baker's yeast)).